An 87-amino-acid chain; its full sequence is Conotoxin QcMNCL-XIII0.1 (87 aa).

A signal peptide spans 1-18 (MNCLQLLLVLLLISTIAA). A propeptide spanning residues 19 to 34 (LHGDGRVPQRRGRNIR) is cleaved from the precursor.

Contains 4 disulfide bonds. As to expression, expressed by the venom duct.

Its subcellular location is the secreted. In terms of biological role, may interact and inhibit Cav3.1/CACNA1G calcium channels. In a ex vivo model, shows ability to block nerve signal transduction. This chain is Conotoxin QcMNCL-XIII0.1, found in Conus quercinus (Oak cone).